The primary structure comprises 59 residues: MGIFLLFLVLLAVPQAAPESDTVTCRKMKGKCSFLLCPFFKRSSGTCYNGLAKCCRPFW.

Residues 1 to 18 (MGIFLLFLVLLAVPQAAP) form the signal peptide. 3 cysteine pairs are disulfide-bonded: Cys-25-Cys-54, Cys-32-Cys-47, and Cys-37-Cys-55.

It belongs to the beta-defensin family.

It is found in the secreted. The protein resides in the cytoplasmic granule. Its function is as follows. Has bactericidal activity. The protein is Gallinacin-14 (GAL14) of Gallus gallus (Chicken).